We begin with the raw amino-acid sequence, 316 residues long: 4-hydroxy-3-methylbut-2-enyl diphosphate reductase (316 aa).

Cys-12 provides a ligand contact to [4Fe-4S] cluster. The (2E)-4-hydroxy-3-methylbut-2-enyl diphosphate site is built by His-41 and His-74. The dimethylallyl diphosphate site is built by His-41 and His-74. Isopentenyl diphosphate is bound by residues His-41 and His-74. Cys-96 contributes to the [4Fe-4S] cluster binding site. A (2E)-4-hydroxy-3-methylbut-2-enyl diphosphate-binding site is contributed by His-124. Position 124 (His-124) interacts with dimethylallyl diphosphate. His-124 contacts isopentenyl diphosphate. Residue Glu-126 is the Proton donor of the active site. Thr-167 serves as a coordination point for (2E)-4-hydroxy-3-methylbut-2-enyl diphosphate. Cys-197 serves as a coordination point for [4Fe-4S] cluster. Positions 225, 226, 227, and 269 each coordinate (2E)-4-hydroxy-3-methylbut-2-enyl diphosphate. Dimethylallyl diphosphate contacts are provided by Ser-225, Ser-226, Asn-227, and Ser-269. 4 residues coordinate isopentenyl diphosphate: Ser-225, Ser-226, Asn-227, and Ser-269.

It belongs to the IspH family. In terms of assembly, homodimer. The cofactor is [4Fe-4S] cluster.

The catalysed reaction is isopentenyl diphosphate + 2 oxidized [2Fe-2S]-[ferredoxin] + H2O = (2E)-4-hydroxy-3-methylbut-2-enyl diphosphate + 2 reduced [2Fe-2S]-[ferredoxin] + 2 H(+). It catalyses the reaction dimethylallyl diphosphate + 2 oxidized [2Fe-2S]-[ferredoxin] + H2O = (2E)-4-hydroxy-3-methylbut-2-enyl diphosphate + 2 reduced [2Fe-2S]-[ferredoxin] + 2 H(+). It participates in isoprenoid biosynthesis; dimethylallyl diphosphate biosynthesis; dimethylallyl diphosphate from (2E)-4-hydroxy-3-methylbutenyl diphosphate: step 1/1. It functions in the pathway isoprenoid biosynthesis; isopentenyl diphosphate biosynthesis via DXP pathway; isopentenyl diphosphate from 1-deoxy-D-xylulose 5-phosphate: step 6/6. In terms of biological role, catalyzes the conversion of 1-hydroxy-2-methyl-2-(E)-butenyl 4-diphosphate (HMBPP) into a mixture of isopentenyl diphosphate (IPP) and dimethylallyl diphosphate (DMAPP). Acts in the terminal step of the DOXP/MEP pathway for isoprenoid precursor biosynthesis. The protein is 4-hydroxy-3-methylbut-2-enyl diphosphate reductase of Salmonella paratyphi C (strain RKS4594).